A 187-amino-acid polypeptide reads, in one-letter code: Photosystem I assembly protein Ycf4 (187 aa).

Helical transmembrane passes span 23–43 (INYF…IVGI) and 70–90 (FYGI…ILGV).

This sequence belongs to the Ycf4 family.

The protein resides in the plastid. It is found in the chloroplast thylakoid membrane. Functionally, seems to be required for the assembly of the photosystem I complex. The sequence is that of Photosystem I assembly protein Ycf4 from Chara vulgaris (Common stonewort).